We begin with the raw amino-acid sequence, 105 residues long: Large ribosomal subunit protein uL24 (105 aa).

The protein belongs to the universal ribosomal protein uL24 family. As to quaternary structure, part of the 50S ribosomal subunit.

In terms of biological role, one of two assembly initiator proteins, it binds directly to the 5'-end of the 23S rRNA, where it nucleates assembly of the 50S subunit. One of the proteins that surrounds the polypeptide exit tunnel on the outside of the subunit. This Staphylococcus epidermidis (strain ATCC 35984 / DSM 28319 / BCRC 17069 / CCUG 31568 / BM 3577 / RP62A) protein is Large ribosomal subunit protein uL24.